A 466-amino-acid chain; its full sequence is Uronate isomerase (466 aa).

The protein belongs to the metallo-dependent hydrolases superfamily. Uronate isomerase family.

The catalysed reaction is D-glucuronate = D-fructuronate. It catalyses the reaction aldehydo-D-galacturonate = keto-D-tagaturonate. Its pathway is carbohydrate metabolism; pentose and glucuronate interconversion. The sequence is that of Uronate isomerase from Brucella canis (strain ATCC 23365 / NCTC 10854 / RM-666).